Reading from the N-terminus, the 205-residue chain is Holliday junction resolvase RecU (205 aa).

Residues threonine 83, aspartate 85, glutamate 98, and glutamine 117 each contribute to the Mg(2+) site.

Belongs to the RecU family. Mg(2+) is required as a cofactor.

It localises to the cytoplasm. The enzyme catalyses Endonucleolytic cleavage at a junction such as a reciprocal single-stranded crossover between two homologous DNA duplexes (Holliday junction).. Endonuclease that resolves Holliday junction intermediates in genetic recombination. Cleaves mobile four-strand junctions by introducing symmetrical nicks in paired strands. Promotes annealing of linear ssDNA with homologous dsDNA. Required for DNA repair, homologous recombination and chromosome segregation. This chain is Holliday junction resolvase RecU, found in Streptococcus suis (strain 98HAH33).